The chain runs to 220 residues: Thiamine-phosphate synthase (220 aa).

Residues 46 to 50 and Asn-83 each bind 4-amino-2-methyl-5-(diphosphooxymethyl)pyrimidine; that span reads QFREK. Mg(2+) is bound by residues Asp-84 and Asp-103. Position 122 (Ser-122) interacts with 4-amino-2-methyl-5-(diphosphooxymethyl)pyrimidine. 149–151 is a binding site for 2-[(2R,5Z)-2-carboxy-4-methylthiazol-5(2H)-ylidene]ethyl phosphate; that stretch reads TNS. Residue Lys-152 participates in 4-amino-2-methyl-5-(diphosphooxymethyl)pyrimidine binding. 2-[(2R,5Z)-2-carboxy-4-methylthiazol-5(2H)-ylidene]ethyl phosphate contacts are provided by residues Gly-181 and 201 to 202; that span reads IS.

The protein belongs to the thiamine-phosphate synthase family. Mg(2+) is required as a cofactor.

The enzyme catalyses 2-[(2R,5Z)-2-carboxy-4-methylthiazol-5(2H)-ylidene]ethyl phosphate + 4-amino-2-methyl-5-(diphosphooxymethyl)pyrimidine + 2 H(+) = thiamine phosphate + CO2 + diphosphate. It carries out the reaction 2-(2-carboxy-4-methylthiazol-5-yl)ethyl phosphate + 4-amino-2-methyl-5-(diphosphooxymethyl)pyrimidine + 2 H(+) = thiamine phosphate + CO2 + diphosphate. The catalysed reaction is 4-methyl-5-(2-phosphooxyethyl)-thiazole + 4-amino-2-methyl-5-(diphosphooxymethyl)pyrimidine + H(+) = thiamine phosphate + diphosphate. It participates in cofactor biosynthesis; thiamine diphosphate biosynthesis; thiamine phosphate from 4-amino-2-methyl-5-diphosphomethylpyrimidine and 4-methyl-5-(2-phosphoethyl)-thiazole: step 1/1. In terms of biological role, condenses 4-methyl-5-(beta-hydroxyethyl)thiazole monophosphate (THZ-P) and 2-methyl-4-amino-5-hydroxymethyl pyrimidine pyrophosphate (HMP-PP) to form thiamine monophosphate (TMP). The protein is Thiamine-phosphate synthase of Mannheimia succiniciproducens (strain KCTC 0769BP / MBEL55E).